Reading from the N-terminus, the 286-residue chain is Bifunctional protein FolD (286 aa).

Residues 165–167 (GRS), Ser-190, and Val-231 contribute to the NADP(+) site.

The protein belongs to the tetrahydrofolate dehydrogenase/cyclohydrolase family. In terms of assembly, homodimer.

The catalysed reaction is (6R)-5,10-methylene-5,6,7,8-tetrahydrofolate + NADP(+) = (6R)-5,10-methenyltetrahydrofolate + NADPH. The enzyme catalyses (6R)-5,10-methenyltetrahydrofolate + H2O = (6R)-10-formyltetrahydrofolate + H(+). The protein operates within one-carbon metabolism; tetrahydrofolate interconversion. Catalyzes the oxidation of 5,10-methylenetetrahydrofolate to 5,10-methenyltetrahydrofolate and then the hydrolysis of 5,10-methenyltetrahydrofolate to 10-formyltetrahydrofolate. The polypeptide is Bifunctional protein FolD (Bacillus cereus (strain AH187)).